The chain runs to 148 residues: Hemoglobin subunit beta-A (148 aa).

One can recognise a Globin domain in the interval Asp-3–His-148. Heme b is bound by residues His-64 and His-93.

It belongs to the globin family. Heterotetramer of two alpha chains and two beta chains. As to expression, red blood cells.

In terms of biological role, involved in oxygen transport from gills to the various peripheral tissues. The chain is Hemoglobin subunit beta-A (hbb1) from Seriola quinqueradiata (Five-ray yellowtail).